Consider the following 161-residue polypeptide: Decarboxylase (161 aa).

Residues 29-131 (QGMSEEAYRK…VGDHENFADT (103 aa)) enclose the EthD domain.

Belongs to the tpcK family.

The catalysed reaction is atrochrysone carboxylate + H(+) = atrochrysone + CO2. Its pathway is secondary metabolite biosynthesis. Functionally, decarboxylase; part of the gene cluster that mediates the biosynthesis of monodictyphenone, a prenyl xanthone derivative. The pathway begins with the synthesis of atrochrysone thioester by the polyketide synthase (PKS) mdpG. The atrochrysone carboxyl ACP thioesterase mdpF then breaks the thioester bond and releases the atrochrysone carboxylic acid from mdpG. The atrochrysone carboxylic acid is then converted to atrochrysone which is further transformed into emodin anthrone by mdpH-1 and mdpH-2. Emodin is further modified to yield monodictyphenone via several steps involving mdpB, mdpC mdpJ, mdpK and mdpL. These enzymes with xptA, xptB and xptC are also proposed to be involved in the synthesis of shamixanthone from emodin. Especially, direct reduction of emodin by the short chain dehydrogenase mdpC followed by dehydration catalyzed by the scytalone dehydratase-like protein mdpB gives loss of oxygen and formation of chrysophanol intermediate in two simple steps. The chain is Decarboxylase from Emericella nidulans (strain FGSC A4 / ATCC 38163 / CBS 112.46 / NRRL 194 / M139) (Aspergillus nidulans).